The following is a 326-amino-acid chain: MRVENNNVSGQNHDPEQIDLIDLLVQLWRGKMTIIISVIVAIALAIGYLAVAKEKWTSTAIITQPDVGQIAGYNNAMNVIYGQAAPKVSDLQETLIGRFSSAFSALAETLDNQEEREKLTIEPSVKNQQLPLTVSYVGQTAEGAQMKLAQYIQQVDDKVNQELEKDLKDNIALGRKNLQDSLRTQEVVAQEQKDLRIRQIQEALQYANQAQVTKPQIQQTGEDITQDTLFLLGSEALESMIKHEATRPLVFSPNYYQTRQNLLDIESLKVDDLDIHAYRYVMKPMLPIRRDSPKKAITLILAVLLGGMVGAGIVLGRNALRNYNAK.

Residues 1 to 31 (MRVENNNVSGQNHDPEQIDLIDLLVQLWRGK) are Cytoplasmic-facing. A helical membrane pass occupies residues 32 to 52 (MTIIISVIVAIALAIGYLAVA). At 53–295 (KEKWTSTAII…LPIRRDSPKK (243 aa)) the chain is on the periplasmic side. Residues 296-316 (AITLILAVLLGGMVGAGIVLG) traverse the membrane as a helical segment. Topologically, residues 317–326 (RNALRNYNAK) are cytoplasmic.

This sequence belongs to the WzzB/Cld/Rol family. Homodimer.

The protein localises to the cell inner membrane. It participates in bacterial outer membrane biogenesis; lipopolysaccharide biosynthesis. Its function is as follows. Confers a modal distribution of chain length on the O-antigen component of lipopolysaccharide (LPS). Gives rise to a reduced number of short chain molecules and increases in numbers of longer molecules. The polypeptide is Chain length determinant protein (wzzB) (Escherichia coli (strain K12)).